The sequence spans 283 residues: Thymidylate synthase (283 aa).

Arg22 serves as a coordination point for dUMP. Residue Cys160 is the Nucleophile of the active site. Residues 180-183, Asn191, and 221-223 each bind dUMP; these read RSCD and HIY. Asp183 is a (6R)-5,10-methylene-5,6,7,8-tetrahydrofolate binding site. Ala282 is a (6R)-5,10-methylene-5,6,7,8-tetrahydrofolate binding site.

It belongs to the thymidylate synthase family. Bacterial-type ThyA subfamily. In terms of assembly, homodimer.

The protein localises to the cytoplasm. It carries out the reaction dUMP + (6R)-5,10-methylene-5,6,7,8-tetrahydrofolate = 7,8-dihydrofolate + dTMP. The protein operates within pyrimidine metabolism; dTTP biosynthesis. Its function is as follows. Catalyzes the reductive methylation of 2'-deoxyuridine-5'-monophosphate (dUMP) to 2'-deoxythymidine-5'-monophosphate (dTMP) while utilizing 5,10-methylenetetrahydrofolate (mTHF) as the methyl donor and reductant in the reaction, yielding dihydrofolate (DHF) as a by-product. This enzymatic reaction provides an intracellular de novo source of dTMP, an essential precursor for DNA biosynthesis. The protein is Thymidylate synthase of Colwellia psychrerythraea (strain 34H / ATCC BAA-681) (Vibrio psychroerythus).